A 110-amino-acid chain; its full sequence is MEIEKTNRMNALFEFYAALLTDKQMNYIELYYADDYSLAEIAEEFGVSRQAVYDNIKRTEKILEDYEMKLHMYSDYIVRSQIFDQILERYPKDDFLQEQIEILTSIDXRE.

Belongs to the UPF0122 family.

Might take part in the signal recognition particle (SRP) pathway. This is inferred from the conservation of its genetic proximity to ftsY/ffh. May be a regulatory protein. In Streptococcus pneumoniae serotype 19F (strain G54), this protein is UPF0122 protein SPG_1182.